Consider the following 297-residue polypeptide: MAQLSVEQFLNEQKQAVETALSRYIERLEGPAKLKKAMAYSLEAGGKRIRPLLLLSTVRALGKDPAVGLPVACAIEMIHTYSLIHDDLPSMDNDDLRRGKPTNHKVFGEAMAILAGDGLLTYAFQLITEIDDERIPPSVRLRLIERLAKAAGPEGMVAGQAADMEGEGKTLTLSELEYIHRHKTGKMLQYSVHAGALIGGADARQTRELDEFAAHLGLAFQIRDDILDIEGAEEKIGKPVGSDQSNNKATYPALLSLAGAKEKLAFHIEAAQRHLRNADVDGAALAYICELVAARDH.

Isopentenyl diphosphate is bound by residues Lys47, Arg50, and His79. Asp86 and Asp92 together coordinate Mg(2+). Residue Arg97 coordinates (2E)-geranyl diphosphate. An isopentenyl diphosphate-binding site is contributed by Arg98. (2E)-geranyl diphosphate is bound by residues Lys183, Thr184, Gln221, and Lys238.

It belongs to the FPP/GGPP synthase family. Mg(2+) serves as cofactor.

The protein resides in the cytoplasm. The catalysed reaction is isopentenyl diphosphate + (2E)-geranyl diphosphate = (2E,6E)-farnesyl diphosphate + diphosphate. This Geobacillus stearothermophilus (Bacillus stearothermophilus) protein is Farnesyl diphosphate synthase.